Reading from the N-terminus, the 491-residue chain is MDFLGLPTILLLVCISCLLIAAWRSTSQRGKEPPGPTPIPIIGNVFQLNPWDLMGSFKELSKKYGPIFTIHLGPKKIVVLYGYDIVKEALIDNGEAFSGRGILPLIEKLFKGTGIVTSNGETWRQLRRFALTTLRDFGMGKKGIEERIQEEAHFLVERIRKTHEEPFNPGKFLIHAVANIICSIVFGDRFDYEDKKFLDLIEMLEENNKYQNRIQTLLYNFFPTILDSLPGPHKTLIKNTETVDDFIKEIVIAHQESFDASCPRDFIDAFINKMEQEKENSYFTVESLTRTTLDLFLAGTGTTSTTLRYGLLILLKHPEIEEKMHKEIDRVVGRDRSPCMADRSQLPYTDAVIHEIQRFIDFLPLNVPHAVIKDTKLRDYFIPKDTMIFPLLSPILQDCKEFPNPEKFDPGHFLNANGTFRRSDYFMPFSAGKRICAGEGLARMEIFLFLTSILQNFSLKPVKDRKDIDISPIITSLANMPRPYEVSFIPR.

Cys436 lines the heme pocket.

This sequence belongs to the cytochrome P450 family. Heme serves as cofactor. In terms of tissue distribution, expressed in liver.

It localises to the endoplasmic reticulum membrane. Its subcellular location is the microsome membrane. It carries out the reaction an organic molecule + reduced [NADPH--hemoprotein reductase] + O2 = an alcohol + oxidized [NADPH--hemoprotein reductase] + H2O + H(+). Its function is as follows. Cytochromes P450 are a group of heme-thiolate monooxygenases. In liver microsomes, this enzyme is involved in an NADPH-dependent electron transport pathway. It oxidizes a variety of structurally unrelated compounds, including steroids, fatty acids, and xenobiotics. This is Cytochrome P450 2H1 (CYP2H1) from Gallus gallus (Chicken).